A 262-amino-acid chain; its full sequence is Alpha-tubulin N-acetyltransferase 1 (262 aa).

The region spanning 1–177 (MQVDADLRPI…TNFVVFEELF (177 aa)) is the N-acetyltransferase domain. 111–124 (FYVHFSCQRQGVGQ) contributes to the acetyl-CoA binding site.

Belongs to the acetyltransferase ATAT1 family. In terms of tissue distribution, expressed solely in touch receptor neurons.

The catalysed reaction is L-lysyl-[alpha-tubulin] + acetyl-CoA = N(6)-acetyl-L-lysyl-[alpha-tubulin] + CoA + H(+). Its function is as follows. Specifically acetylates 'Lys-40' in alpha-tubulin/mec-12 on the lumenal side of microtubules. Promotes microtubule destabilization and accelerates microtubule dynamics; this activity may be independent of acetylation activity. Acetylates alpha-tubulin with a slow enzymatic rate, due to a catalytic site that is not optimized for acetyl transfer. Enters the microtubule through each end and diffuses quickly throughout the lumen of microtubules. Acetylates only long/old microtubules because of its slow acetylation rate since it does not have time to act on dynamically unstable microtubules before the enzyme is released. Required for the maintenance of touch receptor neurons and possibly other type of neurons involved in locomotion. Regulates the number and localization of mitochondria in mechanosensory neurons. Plays a role in axonal transport. This Caenorhabditis elegans protein is Alpha-tubulin N-acetyltransferase 1.